We begin with the raw amino-acid sequence, 580 residues long: Putative monoterpene synthase 8 (580 aa).

Residues 1–44 constitute a chloroplast transit peptide; the sequence is MACTSNLSSLSKSWAVLDVPRGAPKATGLWLKRQFIFKTSRICM. Mg(2+) is bound by residues Asp-333, Asp-337, Asp-478, Thr-482, and Glu-486. The short motif at 333–337 is the DDXXD motif element; that stretch reads DDIFD.

It belongs to the terpene synthase family. Tpsg subfamily. In terms of assembly, monomer. Requires Mg(2+) as cofactor. Mn(2+) is required as a cofactor. In terms of tissue distribution, confined to flowers.

The protein resides in the plastid. It is found in the chloroplast. It participates in secondary metabolite biosynthesis; terpenoid biosynthesis. Monoterpene synthase (mono-TPS) involved in the biosynthesis of monoterpenes natural products, constituent of coffee beverage aroma. The protein is Putative monoterpene synthase 8 of Coffea arabica (Arabian coffee).